The following is a 167-amino-acid chain: Small ribosomal subunit protein uS5 (167 aa).

Positions 11–74 constitute an S5 DRBM domain; it reads LQEKLIAVNR…EKARRAMINV (64 aa).

It belongs to the universal ribosomal protein uS5 family. Part of the 30S ribosomal subunit. Contacts proteins S4 and S8.

In terms of biological role, with S4 and S12 plays an important role in translational accuracy. Located at the back of the 30S subunit body where it stabilizes the conformation of the head with respect to the body. This chain is Small ribosomal subunit protein uS5, found in Yersinia enterocolitica serotype O:8 / biotype 1B (strain NCTC 13174 / 8081).